A 1008-amino-acid chain; its full sequence is MASITFGNACTVVFGQVRKEEVTAGPVAVNLNEGTRMVVVPTAAQMATPTPSVSIKIINRWSNKAVSSYERQVEDVFANFFAKKERSDELLTRYYGKVVQKGNKLMVKRAPLHVARVLEKQRLQDIEDEKAFLQYRDAGVHVAGSVKFTDTRSRGQTVSFRTEHYKPTGKIVQKKKAQKQRANADVDHLIDEVMKICSADCKQVEFISMGKRRLTAKFKLFGKSVIPCIHLAHEQGRRLRRELDPRIHEQVIAHLVTGRKVRELIKDDMVTYGWSGAILNKNLFKRTPFRWDEVVIRGRLYGKLVDARSKLSECSKDKIHQYSSFEAQFWKGWKNKFDTLHPHNKDHICEPTINNEKCGEIVATIFQAIHPVIKVSCSTCRERLTKASNEELNEYLATNLACHKATFDDMRQQHATVNTVLNKIEQTSLANPNLKDSMEIVRLLQNLNQTQARQLMKVNNTLLKGNVATSEEFSDATTQLLEVTRWYAKHLSLVDEGSISSFRNKATSKSLINPSLLCDNQLDRNGNFVWGERGRHSKRFFENFFEEVVPGGGYKKYQIRNSPNCTRKLAIGNLIVPMSLERARNALIGESVERLPVTEACVSRVNGAFMHVASCVTSDNGSAHFSPLYSPTKRHLVVGTTGDSKYIDLPATESDKMYVAKEGYCYINIFLAMLVNVNEDSAKDFTKMIRDTIVPMLGTWPSMMDVATACYILTVFHPETKSAELPRILVDHTNKTMHVIDSFGSISTGYHILKAGTVSQLIHFASNELVSEMKHYVVGGEAPHARRMRMEKALIQGIFKPKQLVYLIEEDPYILMMSLVSPTLLINLFNVGGLEVAMKHWIKKEMNIGLIFSMLSSLAQKVSRADLVNEQITMIDANAAQFIETLAGIDVENPMRNELVSALTMMLARSDVDSTLNKTGFTGFSDTLLEMREKNYWRRAQQGMVRAKLVGKIFFNHFLEASAKAYYGTFAKHKATRYRRQVCNLMYLVTWKDQGPIQWSKKCNIRSV.

In terms of domain architecture, Peptidase S30 spans 180–322 (QRANADVDHL…ECSKDKIHQY (143 aa)). Active-site for P1 proteinase activity residues include His-233, Glu-242, and Ser-275. The short motif at 374 to 377 (KVSC) is the Involved in interaction with stylet and aphid transmission element. The Involved in virions binding and aphid transmission motif lies at 631 to 633 (PTK). Residues 657 to 779 (MYVAKEGYCY…VSEMKHYVVG (123 aa)) form the Peptidase C6 domain. Catalysis depends on for helper component proteinase activity residues Cys-665 and His-738.

This sequence belongs to the potyviridae P3N-PIPO polyprotein family. As to quaternary structure, interacts (via PIPO domain) with host PCaP1 protein; this interaction may help to anchor the movement complex to the plasma membrane from which the complex could move to the plasmodesmata. In terms of processing, potyviral RNA is expressed as two polyproteins which undergo post-translational proteolytic processing. Genome polyprotein is processed by NIa-pro, P1 and HC-pro proteinases resulting in the production of at least ten individual proteins. P3N-PIPO is cleaved by P1 and HC-pro proteinases resulting in the production of three individual proteins. The P1 proteinase and the HC-pro cleave only their respective C-termini autocatalytically.

Its subcellular location is the host cell junction. It is found in the host plasmodesma. It catalyses the reaction Hydrolyzes a Gly-|-Gly bond at its own C-terminus, commonly in the sequence -Tyr-Xaa-Val-Gly-|-Gly, in the processing of the potyviral polyprotein.. In terms of biological role, required for aphid transmission and also has proteolytic activity. Only cleaves a Gly-Gly dipeptide at its own C-terminus. Interacts with virions and aphid stylets. Acts as a suppressor of RNA-mediated gene silencing, also known as post-transcriptional gene silencing (PTGS), a mechanism of plant viral defense that limits the accumulation of viral RNAs. May have RNA-binding activity. Its function is as follows. Allows efficient cell to cell propagation, by bypassing the host cell wall barrier. Transports viral genome to neighboring plant cells directly through plasmosdesmata, without any budding. The sequence is that of P3N-PIPO polyprotein from Peanut mottle virus (strain M).